We begin with the raw amino-acid sequence, 425 residues long: uncharacterized protein (425 aa).

Positions 55 to 181 (RYSHSLGVYE…DLDADRMDYL (127 aa)) constitute an HD domain.

This is an uncharacterized protein from Mycoplasma pneumoniae (strain ATCC 29342 / M129 / Subtype 1) (Mycoplasmoides pneumoniae).